Reading from the N-terminus, the 379-residue chain is MLDFLPFSRPAMGAEELAAVKTVLDSGWITTGPKNQELEAAFCRLTGNQYAVAVSSATAGMHIALMALGIGEGDEVITPSMTWVSTLNMIVLLGANPVMVDVDRDTLMVTPEHIEAAITPQTKAIIPVHYAGAPADLDAIYALGERYGIPVIEDAAHATGTSYKGRHIGARGTAIFSFHAIKNITCAEGGIVVTDNPQFADKLRSLKFHGLGVDAWDRQSGGRAPQAEVLAPGYKYNLPDLNAAIALAQLQKLDALNARRAAIAAQYHQAMADLPFQPLSLPSWEHIHAWHLFIIRVDEARCGITRDALMASLKTKGIGTGLHFRAAHTQKYYRERFPTLTLPDTEWNSERICSLPLFPDMTESDFDRVITALHQIAGQ.

Position 182 is an N6-(pyridoxal phosphate)lysine (lysine 182).

This sequence belongs to the DegT/DnrJ/EryC1 family. ArnB subfamily. In terms of assembly, homodimer. It depends on pyridoxal 5'-phosphate as a cofactor.

The enzyme catalyses UDP-4-amino-4-deoxy-beta-L-arabinose + 2-oxoglutarate = UDP-beta-L-threo-pentopyranos-4-ulose + L-glutamate. Its pathway is nucleotide-sugar biosynthesis; UDP-4-deoxy-4-formamido-beta-L-arabinose biosynthesis; UDP-4-deoxy-4-formamido-beta-L-arabinose from UDP-alpha-D-glucuronate: step 2/3. It functions in the pathway bacterial outer membrane biogenesis; lipopolysaccharide biosynthesis. Catalyzes the conversion of UDP-4-keto-arabinose (UDP-Ara4O) to UDP-4-amino-4-deoxy-L-arabinose (UDP-L-Ara4N). The modified arabinose is attached to lipid A and is required for resistance to polymyxin and cationic antimicrobial peptides. This chain is UDP-4-amino-4-deoxy-L-arabinose--oxoglutarate aminotransferase, found in Salmonella paratyphi A (strain ATCC 9150 / SARB42).